A 332-amino-acid chain; its full sequence is Ferredoxin--NADP reductase 2 (332 aa).

Asp33, Gln41, Tyr46, Val86, Ile121, Asp282, and Ser325 together coordinate FAD.

It belongs to the ferredoxin--NADP reductase type 2 family. In terms of assembly, homodimer. FAD is required as a cofactor.

It catalyses the reaction 2 reduced [2Fe-2S]-[ferredoxin] + NADP(+) + H(+) = 2 oxidized [2Fe-2S]-[ferredoxin] + NADPH. The polypeptide is Ferredoxin--NADP reductase 2 (Sulfolobus acidocaldarius (strain ATCC 33909 / DSM 639 / JCM 8929 / NBRC 15157 / NCIMB 11770)).